We begin with the raw amino-acid sequence, 248 residues long: Tropomyosin alpha-4 chain (248 aa).

The residue at position 2 (A2) is an N-acetylalanine. The stretch at 2–248 (AGLNSLEAVK…DQTLDELNCI (247 aa)) forms a coiled coil. Position 6 is a phosphoserine (S6). A disordered region spans residues 16–47 (ALQQQADEAEDRAQGLQRELDGERERREKAEG). A compositionally biased stretch (basic and acidic residues) spans 33–47 (RELDGERERREKAEG). K177 and K215 each carry N6-acetyllysine. The residue at position 216 (T216) is a Phosphothreonine.

The protein belongs to the tropomyosin family. As to quaternary structure, homodimer. Heterodimer of an alpha (TPM1, TPM3 or TPM4) and a beta (TPM2) chain.

Its subcellular location is the cytoplasm. It localises to the cytoskeleton. Binds to actin filaments in muscle and non-muscle cells. Plays a central role, in association with the troponin complex, in the calcium dependent regulation of vertebrate striated muscle contraction. Smooth muscle contraction is regulated by interaction with caldesmon. In non-muscle cells is implicated in stabilizing cytoskeleton actin filaments. Binds calcium. The chain is Tropomyosin alpha-4 chain (TPM4) from Equus caballus (Horse).